The following is a 342-amino-acid chain: Probable long-chain-alcohol O-fatty-acyltransferase 3 (342 aa).

8 consecutive transmembrane segments (helical) span residues 9 to 29 (IKLWISAIISISYCYYLSTGI), 36 to 56 (LLSVLPVCALFLVFPLFFSYV), 58 to 78 (FSGCMAFFLSWLANFKLILFS), 115 to 135 (IPIWLFAIKVVIFVVLLQMYE), 153 to 173 (IFLELEIVFMLVKALVFITLG), 227 to 247 (MFLGVFAAFLVSGAVHEMLFF), 255 to 275 (TGEVTWFFLLHGVCTVAEVAV), and 297 to 317 (VGFVVVTSGWFFFPLIRSGII).

This sequence belongs to the wax synthase family.

It localises to the membrane. The catalysed reaction is a long chain fatty alcohol + a fatty acyl-CoA = a wax ester + CoA. Catalyzes the final step in the synthesis of long-chain linear esters (waxes). This chain is Probable long-chain-alcohol O-fatty-acyltransferase 3 (AT3), found in Arabidopsis thaliana (Mouse-ear cress).